A 263-amino-acid polypeptide reads, in one-letter code: 3-deoxy-manno-octulosonate cytidylyltransferase (263 aa).

This sequence belongs to the KdsB family.

It localises to the cytoplasm. The catalysed reaction is 3-deoxy-alpha-D-manno-oct-2-ulosonate + CTP = CMP-3-deoxy-beta-D-manno-octulosonate + diphosphate. Its pathway is nucleotide-sugar biosynthesis; CMP-3-deoxy-D-manno-octulosonate biosynthesis; CMP-3-deoxy-D-manno-octulosonate from 3-deoxy-D-manno-octulosonate and CTP: step 1/1. The protein operates within bacterial outer membrane biogenesis; lipopolysaccharide biosynthesis. Activates KDO (a required 8-carbon sugar) for incorporation into bacterial lipopolysaccharide in Gram-negative bacteria. The sequence is that of 3-deoxy-manno-octulosonate cytidylyltransferase from Burkholderia cenocepacia (strain HI2424).